We begin with the raw amino-acid sequence, 176 residues long: Cytochrome b (176 aa).

3 helical membrane-spanning segments follow: residues 33–53 (FGSL…FLAM), 77–98 (WILR…YLHV), and 113–133 (WNIG…GYVL). Positions 83 and 97 each coordinate heme b.

Belongs to the cytochrome b family. As to quaternary structure, the cytochrome bc1 complex contains 11 subunits: 3 respiratory subunits (MT-CYB, CYC1 and UQCRFS1), 2 core proteins (UQCRC1 and UQCRC2) and 6 low-molecular weight proteins (UQCRH/QCR6, UQCRB/QCR7, UQCRQ/QCR8, UQCR10/QCR9, UQCR11/QCR10 and a cleavage product of UQCRFS1). This cytochrome bc1 complex then forms a dimer. Heme b serves as cofactor.

The protein localises to the mitochondrion inner membrane. Component of the ubiquinol-cytochrome c reductase complex (complex III or cytochrome b-c1 complex) that is part of the mitochondrial respiratory chain. The b-c1 complex mediates electron transfer from ubiquinol to cytochrome c. Contributes to the generation of a proton gradient across the mitochondrial membrane that is then used for ATP synthesis. This Myotis leibii (Eastern small-footed myotis) protein is Cytochrome b (MT-CYB).